The following is a 155-amino-acid chain: 6,7-dimethyl-8-ribityllumazine synthase (155 aa).

Residues Trp-23, 57–59 (AWE), and 81–83 (CVI) contribute to the 5-amino-6-(D-ribitylamino)uracil site. 86 to 87 (DT) lines the (2S)-2-hydroxy-3-oxobutyl phosphate pocket. The active-site Proton donor is His-89. Residue Asn-114 coordinates 5-amino-6-(D-ribitylamino)uracil. Position 128 (Arg-128) interacts with (2S)-2-hydroxy-3-oxobutyl phosphate.

Belongs to the DMRL synthase family. Forms an icosahedral capsid composed of 60 subunits, arranged as a dodecamer of pentamers.

The catalysed reaction is (2S)-2-hydroxy-3-oxobutyl phosphate + 5-amino-6-(D-ribitylamino)uracil = 6,7-dimethyl-8-(1-D-ribityl)lumazine + phosphate + 2 H2O + H(+). Its pathway is cofactor biosynthesis; riboflavin biosynthesis; riboflavin from 2-hydroxy-3-oxobutyl phosphate and 5-amino-6-(D-ribitylamino)uracil: step 1/2. Its function is as follows. Catalyzes the formation of 6,7-dimethyl-8-ribityllumazine by condensation of 5-amino-6-(D-ribitylamino)uracil with 3,4-dihydroxy-2-butanone 4-phosphate. This is the penultimate step in the biosynthesis of riboflavin. The sequence is that of 6,7-dimethyl-8-ribityllumazine synthase from Stenotrophomonas maltophilia (strain K279a).